Consider the following 146-residue polypeptide: Small ribosomal subunit protein uS9 (146 aa).

At S3 the chain carries Phosphoserine. N6-acetyllysine is present on K60.

The protein belongs to the universal ribosomal protein uS9 family. In terms of assembly, component of the small ribosomal subunit. Part of the small subunit (SSU) processome, composed of more than 70 proteins and the RNA chaperone small nucleolar RNA (snoRNA) U3.

It localises to the cytoplasm. Its subcellular location is the nucleus. It is found in the nucleolus. Component of the small ribosomal subunit. The ribosome is a large ribonucleoprotein complex responsible for the synthesis of proteins in the cell. Part of the small subunit (SSU) processome, first precursor of the small eukaryotic ribosomal subunit. During the assembly of the SSU processome in the nucleolus, many ribosome biogenesis factors, an RNA chaperone and ribosomal proteins associate with the nascent pre-rRNA and work in concert to generate RNA folding, modifications, rearrangements and cleavage as well as targeted degradation of pre-ribosomal RNA by the RNA exosome. In Bos taurus (Bovine), this protein is Small ribosomal subunit protein uS9 (RPS16).